The following is a 122-amino-acid chain: UPF0382 membrane protein SERP0230 (122 aa).

4 helical membrane-spanning segments follow: residues 3–23 (VFII…AFGA), 46–66 (MYHG…SINV), 69–89 (AGWL…FLAL), and 98–118 (ITPI…IATL).

This sequence belongs to the UPF0382 family.

It is found in the cell membrane. The protein is UPF0382 membrane protein SERP0230 of Staphylococcus epidermidis (strain ATCC 35984 / DSM 28319 / BCRC 17069 / CCUG 31568 / BM 3577 / RP62A).